We begin with the raw amino-acid sequence, 349 residues long: Quinone oxidoreductase-like protein 1 (349 aa).

This sequence belongs to the zinc-containing alcohol dehydrogenase family. Quinone oxidoreductase subfamily. As to quaternary structure, homodimer. Component of the FERRY complex composed of five subunits, TBCK, PPP1R21, FERRY3, CRYZL1 and GATD1 with a ratio of 1:2:1:2:4, respectively. Ubiquitous.

It is found in the early endosome. Functionally, component of the FERRY complex (Five-subunit Endosomal Rab5 and RNA/ribosome intermediary). The FERRY complex directly interacts with mRNAs and RAB5A, and functions as a RAB5A effector involved in the localization and the distribution of specific mRNAs most likely by mediating their endosomal transport. The complex recruits mRNAs and ribosomes to early endosomes through direct mRNA-interaction. In Homo sapiens (Human), this protein is Quinone oxidoreductase-like protein 1 (CRYZL1).